A 258-amino-acid polypeptide reads, in one-letter code: Diacetyl reductase [(S)-acetoin forming] (258 aa).

Residue 8–32 participates in NAD(+) binding; that stretch reads LVTGGAQGIGFKIAERLVEDGFKVA. Ser141 is a substrate binding site. Tyr154 (proton acceptor) is an active-site residue. The active site involves Lys158.

This sequence belongs to the short-chain dehydrogenases/reductases (SDR) family.

The catalysed reaction is (S)-acetoin + NAD(+) = diacetyl + NADH + H(+). Functionally, catalyzes the irreversible reduction of 2,3-butanediol to (S)-acetoin in the presence of NADH. The sequence is that of Diacetyl reductase [(S)-acetoin forming] (butA) from Staphylococcus aureus (strain Mu50 / ATCC 700699).